Consider the following 201-residue polypeptide: MIIVIDYDAGNTANVLRALDKLGVKAELSADPQKIVAASGLILPGVGAFPAAMAELEKRGLVAVIKEAVAKGIPLLGICLGMQLLVEKGLEHCETAGFGFISGICQEISAKAGFPVPHMGWNDLQVKQKSALTAGLQGQAVYFVHSYFTDVPQEYIDVTVDYSIEVPAMIHKDNVYGAQFHPEKSGDVGLGILKKFVDLCD.

Residues 1–201 form the Glutamine amidotransferase type-1 domain; sequence MIIVIDYDAG…ILKKFVDLCD (201 aa). C79 acts as the Nucleophile in catalysis. Catalysis depends on residues H181 and E183.

As to quaternary structure, heterodimer of HisH and HisF.

The protein localises to the cytoplasm. The catalysed reaction is 5-[(5-phospho-1-deoxy-D-ribulos-1-ylimino)methylamino]-1-(5-phospho-beta-D-ribosyl)imidazole-4-carboxamide + L-glutamine = D-erythro-1-(imidazol-4-yl)glycerol 3-phosphate + 5-amino-1-(5-phospho-beta-D-ribosyl)imidazole-4-carboxamide + L-glutamate + H(+). The enzyme catalyses L-glutamine + H2O = L-glutamate + NH4(+). Its pathway is amino-acid biosynthesis; L-histidine biosynthesis; L-histidine from 5-phospho-alpha-D-ribose 1-diphosphate: step 5/9. Functionally, IGPS catalyzes the conversion of PRFAR and glutamine to IGP, AICAR and glutamate. The HisH subunit catalyzes the hydrolysis of glutamine to glutamate and ammonia as part of the synthesis of IGP and AICAR. The resulting ammonia molecule is channeled to the active site of HisF. This chain is Imidazole glycerol phosphate synthase subunit HisH, found in Streptococcus mutans serotype c (strain ATCC 700610 / UA159).